The chain runs to 364 residues: DNA replication and repair protein RecF (364 aa).

An ATP-binding site is contributed by 30–37; the sequence is GENGSGKT.

This sequence belongs to the RecF family.

It localises to the cytoplasm. Functionally, the RecF protein is involved in DNA metabolism; it is required for DNA replication and normal SOS inducibility. RecF binds preferentially to single-stranded, linear DNA. It also seems to bind ATP. The protein is DNA replication and repair protein RecF of Xylella fastidiosa (strain M23).